The chain runs to 111 residues: Colicin-Ia immunity protein (111 aa).

2 consecutive transmembrane segments (helical) span residues 33–53 and 85–105; these read LLFW…KWYI and TGTV…SVII.

It is found in the cell membrane. In terms of biological role, this protein is able to protect a cell, which harbors the plasmid ColIa-CA53 encoding colicin Ia, against colicin Ia. The polypeptide is Colicin-Ia immunity protein (Escherichia coli).